The primary structure comprises 359 residues: Gene 58 protein (359 aa).

11 helical membrane passes run 12-32 (TMAA…CFLF), 45-65 (VDEL…FFCF), 75-95 (YLDL…ICLQ), 103-123 (YLPI…PVTF), 132-152 (YANA…YLLL), 154-174 (FGSV…IAGL), 220-240 (LCVV…AGVY), 246-266 (VLKT…GMGY), 271-289 (ATFV…VFVL), 296-318 (SVLF…TIML), and 330-350 (IVLS…NVLY).

It belongs to the herpesviridae BMRF2 family.

The protein localises to the host membrane. This is Gene 58 protein (58) from Equine herpesvirus 2 (strain 86/87) (EHV-2).